The chain runs to 477 residues: Aspartyl/glutamyl-tRNA(Asn/Gln) amidotransferase subunit B (477 aa).

Belongs to the GatB/GatE family. GatB subfamily. In terms of assembly, heterotrimer of A, B and C subunits.

It catalyses the reaction L-glutamyl-tRNA(Gln) + L-glutamine + ATP + H2O = L-glutaminyl-tRNA(Gln) + L-glutamate + ADP + phosphate + H(+). The enzyme catalyses L-aspartyl-tRNA(Asn) + L-glutamine + ATP + H2O = L-asparaginyl-tRNA(Asn) + L-glutamate + ADP + phosphate + 2 H(+). In terms of biological role, allows the formation of correctly charged Asn-tRNA(Asn) or Gln-tRNA(Gln) through the transamidation of misacylated Asp-tRNA(Asn) or Glu-tRNA(Gln) in organisms which lack either or both of asparaginyl-tRNA or glutaminyl-tRNA synthetases. The reaction takes place in the presence of glutamine and ATP through an activated phospho-Asp-tRNA(Asn) or phospho-Glu-tRNA(Gln). The polypeptide is Aspartyl/glutamyl-tRNA(Asn/Gln) amidotransferase subunit B (Ligilactobacillus salivarius (strain UCC118) (Lactobacillus salivarius)).